A 173-amino-acid polypeptide reads, in one-letter code: SPbeta prophage-derived putative HNH homing endonuclease YosQ (173 aa).

Functionally, a possible homing endonuclease, it is entirely encoded within the YosP intron. This Bacillus subtilis (strain 168) protein is SPbeta prophage-derived putative HNH homing endonuclease YosQ (yosQ).